We begin with the raw amino-acid sequence, 313 residues long: Homoserine O-succinyltransferase (313 aa).

Cys-142 acts as the Acyl-thioester intermediate in catalysis. Residues Lys-163 and Ser-192 each contribute to the substrate site. His-235 functions as the Proton acceptor in the catalytic mechanism. Glu-237 is a catalytic residue. Residue Arg-249 participates in substrate binding.

Belongs to the MetA family.

It localises to the cytoplasm. The enzyme catalyses L-homoserine + succinyl-CoA = O-succinyl-L-homoserine + CoA. The protein operates within amino-acid biosynthesis; L-methionine biosynthesis via de novo pathway; O-succinyl-L-homoserine from L-homoserine: step 1/1. Functionally, transfers a succinyl group from succinyl-CoA to L-homoserine, forming succinyl-L-homoserine. In Shewanella sp. (strain MR-4), this protein is Homoserine O-succinyltransferase.